Reading from the N-terminus, the 636-residue chain is TNFAIP3-interacting protein 1 (636 aa).

The stretch at 20–73 (EASAAFERLVKENSRLKEKMQGIKMLGELLEESQMEATRLRQKAEELVKDNELL) forms a coiled coil. Residues 61–71 (QKAEELVKDNE) are compositionally biased toward basic and acidic residues. 2 disordered regions span residues 61–151 (QKAE…GPLP) and 252–283 (MSNGNKEGASGRPGSPKMEGTGKKAVAGQQQA). At serine 77 the chain carries Phosphoserine. The tract at residues 94-412 (SNVTASPTAP…SPLTRQREYQ (319 aa)) is interaction with Nef. A compositionally biased stretch (polar residues) spans 131–142 (EEQNSPESSSHA). A coiled-coil region spans residues 196-258 (SKVHKNEQRT…KLLMSNGNKE (63 aa)). Serine 284 bears the Phosphoserine mark. The stretch at 294–535 (VALGAAEKKV…RKAKASGERY (242 aa)) forms a coiled coil. Residues 351–367 (DLEAEREQKQRDFDRKL) are interaction with Shigella flexneri ipah9.8. Serine 403 bears the Phosphoserine mark. The required for inhibitory activity of TNF-induced NF-kappa-B activation stretch occupies residues 431–588 (TPPSSPPTAF…MEHPPPLPNS (158 aa)). Threonine 438 carries the post-translational modification Phosphothreonine. Residue serine 442 is modified to Phosphoserine. The interval 452-510 (KQELVTQNELLKQQVKIFEEDFQRERSDRERMNEEKEELKKQVEKLQAQVTLSNAQLKA) is ubiquitin-binding domain (UBD). The Nuclear localization signal motif lies at 524–530 (QKRKAKA). Tyrosine 552 carries the phosphotyrosine modification. Asymmetric dimethylarginine is present on arginine 571. Arginine 599 is modified (asymmetric dimethylarginine; alternate). Arginine 599 carries the post-translational modification Omega-N-methylarginine; alternate. Positions 603–636 (GGVRNPNQSSQVMDPPTARPTEPESPKNDREGPQ) are disordered. The segment covering 623–636 (TEPESPKNDREGPQ) has biased composition (basic and acidic residues). Serine 627 carries the phosphoserine modification.

In terms of assembly, interacts with TNFAIP3 and IKBKG (polyubiquitinated); facilitates TNFAIP3-mediated de-ubiquitination of NEMO/IKBKG. Interacts with polyubiquitin. Interacts with MAPK1, SELPLG and PIK3CD. Interacts with IRAK1 (polyubiquitinated). Interacts with MYD88; the interaction is indicative for participation in an activated TLR-signaling complex. Interacts with HIV-1 matrix protein. Interacts with TAX1BP1. (Microbial infection) Interacts with Shigella flexneri ipah9.8; the interaction promotes polyubiquitination of IKBKG. In terms of processing, phosphorylation at Tyr-552 by SRC-family kinases recruits phosphoinositide-3-kinase (PI3K) PIK3CD:p85 heterodimer which results in integrin activation and leukocyte adhesion to activated endothelium during inflammation. In terms of tissue distribution, ubiquitous. Strongly expressed in peripheral blood lymphocytes, spleen and skeletal muscle, and is weakly expressed in the brain. In peripheral blood mononucleocytes, isoform 4 is mainly expressed and isoform 1 and isoform 7 are almost not expressed. Expression of isoform 1 and isoform 7 increases in leukemic cells.

The protein resides in the cytoplasm. It localises to the nucleus. In terms of biological role, inhibits NF-kappa-B activation and TNF-induced NF-kappa-B-dependent gene expression by regulating TAX1BP1 and A20/TNFAIP3-mediated deubiquitination of IKBKG; proposed to link A20/TNFAIP3 to ubiquitinated IKBKG. Involved in regulation of EGF-induced ERK1/ERK2 signaling pathway; blocks MAPK3/MAPK1 nuclear translocation and MAPK1-dependent transcription. Increases cell surface CD4(T4) antigen expression. Involved in the anti-inflammatory response of macrophages and positively regulates TLR-induced activation of CEBPB. Involved in the prevention of autoimmunity; this function implicates binding to polyubiquitin. Involved in leukocyte integrin activation during inflammation; this function is mediated by association with SELPLG and dependent on phosphorylation by SRC-family kinases. Interacts with HIV-1 matrix protein and is packaged into virions and overexpression can inhibit viral replication. May regulate matrix nuclear localization, both nuclear import of PIC (Preintegration complex) and export of GAG polyprotein and viral genomic RNA during virion production. In case of infection, promotes association of IKBKG with Shigella flexneri E3 ubiquitin-protein ligase ipah9.8 p which in turn promotes polyubiquitination of IKBKG leading to its proteasome-dependent degradation and thus is perturbing NF-kappa-B activation during bacterial infection. This chain is TNFAIP3-interacting protein 1 (TNIP1), found in Homo sapiens (Human).